Here is a 386-residue protein sequence, read N- to C-terminus: Synaptotagmin-5 (386 aa).

The span at 1 to 16 shows a compositional bias: pro residues; the sequence is MFPEPPTPGSPAPETP. Residues 1-21 form a disordered region; sequence MFPEPPTPGSPAPETPPDSSR. The Vesicular portion of the chain corresponds to 1–24; sequence MFPEPPTPGSPAPETPPDSSRIRQ. A helical membrane pass occupies residues 25–45; that stretch reads GAVPAWVLATILLGSGLLVFS. Over 46–386 the chain is Cytoplasmic; it reads SCFCLYRKRC…PDRARPIPAP (341 aa). 2 C2 domains span residues 108-227 and 239-372; these read QLGR…QAWR and KLGD…AQWH. Residues Leu138, Asp139, Asp145, Asp197, Phe198, Asp199, Ser202, Asp205, Asp270, Asp276, Asp330, and Asp332 each contribute to the Ca(2+) site.

Belongs to the synaptotagmin family. Homodimer. Interacts with both alpha- and beta-tubulin. Ca(2+) is required as a cofactor. As to expression, expressed in kidney, adipose tissue, lung and heart, as well as at higher levels in brain.

The protein localises to the cytoplasmic vesicle. It localises to the secretory vesicle. The protein resides in the synaptic vesicle membrane. Its subcellular location is the recycling endosome membrane. Functionally, may be involved in Ca(2+)-dependent exocytosis of secretory vesicles through Ca(2+) and phospholipid binding to the C2 domain or may serve as Ca(2+) sensors in the process of vesicular trafficking and exocytosis. Regulates the Ca(2+)-dependent secretion of norepinephrine in PC12 cells. Required for export from the endocytic recycling compartment to the cell surface. This Rattus norvegicus (Rat) protein is Synaptotagmin-5 (Syt5).